Consider the following 142-residue polypeptide: Probable transport accessory protein MmpS5 (142 aa).

Residues 7-26 (RAWIPLLILVVVAIAGFTVQ) traverse the membrane as a helical segment.

It belongs to the MmpS family.

Its subcellular location is the cell membrane. This is Probable transport accessory protein MmpS5 (mmpS5) from Mycobacterium bovis (strain ATCC BAA-935 / AF2122/97).